The sequence spans 545 residues: Thermosome subunit beta (545 aa).

This sequence belongs to the TCP-1 chaperonin family. Forms a Heterooligomeric complex of two stacked eight-membered rings.

Functionally, molecular chaperone; binds unfolded polypeptides in vitro, and has a weak ATPase activity. This chain is Thermosome subunit beta (thsB), found in Thermococcus sp. (strain KS-8).